Consider the following 177-residue polypeptide: DELTA-stichotoxin-Hcr4b (177 aa).

The tract at residues 3–12 (ALAGTITLGA) is plays an important role in the hemolytic activity. The N-terminal region stretch occupies residues 11–30 (GASLGFQILDKVLGELGKVS). Phosphocholine-binding residues include S54, V87, S105, P107, Y133, Y137, and Y138. The interval 105–120 (SVPFDYNLYSNWWDVK) is trp-rich region, which is important for the binding to lipid membrane.

This sequence belongs to the actinoporin family. Sea anemone subfamily. Octamer or nonamer in membranes. Monomer in the soluble state.

It localises to the secreted. It is found in the nematocyst. Its subcellular location is the target cell membrane. In terms of biological role, pore-forming protein that forms cations-selective hydrophilic pores of around 1 nm and causes cardiac stimulation and cytolysis. Pore formation is a multi-step process that involves specific recognition of membrane sphingomyelin (but neither cholesterol nor phosphatidylcholine) using aromatic rich region and adjacent phosphocholine (POC) binding site, firm binding to the membrane (mainly driven by hydrophobic interactions) accompanied by the transfer of the N-terminal region to the lipid-water interface and finally pore formation after oligomerization of monomers. Cytolytic effects include red blood cells hemolysis, platelet aggregation and lysis, cytotoxic and cytostatic effects on fibroblasts. Lethality in mammals has been ascribed to severe vasospasm of coronary vessels, cardiac arrhythmia, and inotropic effects. Preincubation with exogenous sphingomyeline causes complete loss of hemolytic activity. The chain is DELTA-stichotoxin-Hcr4b from Radianthus crispa (Leathery sea anemone).